The primary structure comprises 211 residues: Wound-induced protein WIN2 (211 aa).

An N-terminal signal peptide occupies residues 1–25 (MVKLSCGPILLALVLCISLTSVANA). In terms of domain architecture, Chitin-binding type-1 spans 26–68 (QQCGRQRGGALCGNNLCCSQFGWCGSTPEYCSPSQGCQSQCTG). 4 disulfides stabilise this stretch: C28–C43, C37–C49, C42–C56, and C62–C66. In terms of domain architecture, Barwin spans 77 to 198 (GSAQNVRATY…VNYQFVNCGD (122 aa)).

The protein is Wound-induced protein WIN2 (WIN2) of Solanum tuberosum (Potato).